A 211-amino-acid polypeptide reads, in one-letter code: FMN-dependent NADH:quinone oxidoreductase 3 (211 aa).

Position 102–105 (102–105) interacts with FMN; it reads MWNF.

It belongs to the azoreductase type 1 family. As to quaternary structure, homodimer. It depends on FMN as a cofactor.

It catalyses the reaction 2 a quinone + NADH + H(+) = 2 a 1,4-benzosemiquinone + NAD(+). It carries out the reaction N,N-dimethyl-1,4-phenylenediamine + anthranilate + 2 NAD(+) = 2-(4-dimethylaminophenyl)diazenylbenzoate + 2 NADH + 2 H(+). Functionally, quinone reductase that provides resistance to thiol-specific stress caused by electrophilic quinones. In terms of biological role, also exhibits azoreductase activity. Catalyzes the reductive cleavage of the azo bond in aromatic azo compounds to the corresponding amines. This Bacillus cereus (strain ZK / E33L) protein is FMN-dependent NADH:quinone oxidoreductase 3.